Reading from the N-terminus, the 462-residue chain is 3-isopropylmalate dehydratase large subunit (462 aa).

Cysteine 337, cysteine 397, and cysteine 400 together coordinate [4Fe-4S] cluster.

The protein belongs to the aconitase/IPM isomerase family. LeuC type 1 subfamily. Heterodimer of LeuC and LeuD. The cofactor is [4Fe-4S] cluster.

The catalysed reaction is (2R,3S)-3-isopropylmalate = (2S)-2-isopropylmalate. The protein operates within amino-acid biosynthesis; L-leucine biosynthesis; L-leucine from 3-methyl-2-oxobutanoate: step 2/4. In terms of biological role, catalyzes the isomerization between 2-isopropylmalate and 3-isopropylmalate, via the formation of 2-isopropylmaleate. The chain is 3-isopropylmalate dehydratase large subunit from Listeria monocytogenes serotype 4a (strain HCC23).